Reading from the N-terminus, the 485-residue chain is Glutamyl-tRNA(Gln) amidotransferase subunit A (485 aa).

Catalysis depends on charge relay system residues lysine 79 and serine 154. Serine 178 (acyl-ester intermediate) is an active-site residue.

Belongs to the amidase family. GatA subfamily. In terms of assembly, heterotrimer of A, B and C subunits.

It catalyses the reaction L-glutamyl-tRNA(Gln) + L-glutamine + ATP + H2O = L-glutaminyl-tRNA(Gln) + L-glutamate + ADP + phosphate + H(+). Allows the formation of correctly charged Gln-tRNA(Gln) through the transamidation of misacylated Glu-tRNA(Gln) in organisms which lack glutaminyl-tRNA synthetase. The reaction takes place in the presence of glutamine and ATP through an activated gamma-phospho-Glu-tRNA(Gln). The polypeptide is Glutamyl-tRNA(Gln) amidotransferase subunit A (Geobacillus kaustophilus (strain HTA426)).